Here is a 622-residue protein sequence, read N- to C-terminus: Palmitoyltransferase ZDHHC13 (622 aa).

Methionine 1 is modified (N-acetylmethionine). Over 1–291 (MEGPGLGSQC…RLWRWLQKCE (291 aa)) the chain is Cytoplasmic. ANK repeat units follow at residues 43 to 78 (PLIE…VRQP), 81 to 110 (ENVS…VVDQ), 115 to 144 (LNST…DPTL), 148 to 177 (EGFS…SVNM), 181 to 211 (NGQT…SLNV), 216 to 245 (HQNT…SLDI), and 249 to 277 (KGET…KMRA). A helical membrane pass occupies residues 292–312 (LFLLLMLSVITMWAVGYILDF). Over 313 to 320 (NSDSWLLK) the chain is Lumenal. Residues 321–341 (GCLLVTLFFLTSLFPRFLVGY) form a helical membrane-spanning segment. At 342 to 347 (KNLVYL) the chain is on the cytoplasmic side. Residues 348 to 368 (PTAFLLSSVFWIFMTWFILFF) form a helical membrane-spanning segment. Residues 369-370 (PD) lie on the Lumenal side of the membrane. The helical transmembrane segment at 371 to 391 (LAGAPFYFSFIFSIVAFLYFF) threads the bilayer. Residues 392–470 (YKTWATDPGF…RCIGFGNHHY (79 aa)) are Cytoplasmic-facing. The region spanning 426 to 476 (TFCTSCLIRKPLRSLHCHVCNSCVARYDQHCLWTGRCIGFGNHHYYIFFLF) is the DHHC domain. The S-palmitoyl cysteine intermediate role is filled by cysteine 456. Residues 471 to 491 (YIFFLFFLSMVCGWIIYGSFI) form a helical membrane-spanning segment. The Lumenal portion of the chain corresponds to 492–518 (YWSSHCATTFKEDGLWTYLNQIVACSP). The chain crosses the membrane as a helical span at residues 519 to 539 (WVLYILMLATFHFSWSTFLLL). The Cytoplasmic segment spans residues 540–622 (NQLFQIAFLG…PAREKVLRSV (83 aa)).

It belongs to the DHHC palmitoyltransferase family. AKR/ZDHHC17 subfamily. In terms of assembly, interacts (via ANK repeats) with CLIP3. Interacts (via ANK repeats) with DNAJC5 (via C-terminus). Interacts (via ANK repeats) with HTT. Interacts (via ANK repeats) with MAP6. Interacts (via ANK repeats) with SNAP23. Interacts (via ANK repeats) with SNAP25. May interact (via ANK repeats) with SPRED2.

The protein resides in the golgi apparatus membrane. It localises to the cytoplasmic vesicle membrane. It catalyses the reaction L-cysteinyl-[protein] + hexadecanoyl-CoA = S-hexadecanoyl-L-cysteinyl-[protein] + CoA. Its function is as follows. Palmitoyltransferase that could catalyze the addition of palmitate onto various protein substrates. Palmitoyltransferase for HTT and GAD2. May play a role in Mg(2+) transport. The chain is Palmitoyltransferase ZDHHC13 from Pongo abelii (Sumatran orangutan).